Consider the following 138-residue polypeptide: Aspartate 1-decarboxylase (138 aa).

Catalysis depends on Ser-25, which acts as the Schiff-base intermediate with substrate; via pyruvic acid. The residue at position 25 (Ser-25) is a Pyruvic acid (Ser). Thr-57 serves as a coordination point for substrate. Tyr-58 serves as the catalytic Proton donor. Gly-73–Ala-75 serves as a coordination point for substrate. Residues Glu-116–Ala-138 are disordered.

Belongs to the PanD family. Heterooctamer of four alpha and four beta subunits. It depends on pyruvate as a cofactor. Is synthesized initially as an inactive proenzyme, which is activated by self-cleavage at a specific serine bond to produce a beta-subunit with a hydroxyl group at its C-terminus and an alpha-subunit with a pyruvoyl group at its N-terminus.

It localises to the cytoplasm. It catalyses the reaction L-aspartate + H(+) = beta-alanine + CO2. The protein operates within cofactor biosynthesis; (R)-pantothenate biosynthesis; beta-alanine from L-aspartate: step 1/1. Catalyzes the pyruvoyl-dependent decarboxylation of aspartate to produce beta-alanine. The chain is Aspartate 1-decarboxylase from Corynebacterium jeikeium (strain K411).